The sequence spans 134 residues: Profilin-2 (134 aa).

The cysteines at positions 13 and 118 are disulfide-linked. The short motif at 84–100 is the Involved in PIP2 interaction element; sequence AVIRGKKGAGGITIKKT. T114 carries the post-translational modification Phosphothreonine.

It belongs to the profilin family. In terms of assembly, occurs in many kinds of cells as a complex with monomeric actin in a 1:1 ratio. Post-translationally, phosphorylated by MAP kinases.

It localises to the cytoplasm. The protein resides in the cytoskeleton. Binds to actin and affects the structure of the cytoskeleton. At high concentrations, profilin prevents the polymerization of actin, whereas it enhances it at low concentrations. The sequence is that of Profilin-2 from Olea europaea (Common olive).